Reading from the N-terminus, the 4923-residue chain is Bridge-like lipid transfer protein family member 1 (4923 aa).

Residues 25-45 traverse the membrane as a helical segment; it reads FVWLLVATIMSCGWIIYLTYY. Disordered stretches follow at residues 160–179, 606–631, 1203–1277, 1300–1334, 1357–1400, 1471–1494, 1630–1660, 1878–1948, 2191–2235, 2262–2281, 2355–2375, 2550–2655, 2885–2910, 3564–3596, 3645–3695, 3739–3797, 3848–3884, 4017–4071, 4102–4124, 4249–4309, and 4797–4827; these read NRDE…SVHI, HSKS…KPRW, SLHV…SARL, FSSE…DSST, TEEF…SVEG, TNKR…SEES, SAAK…DLSI, RDGV…PDSS, SKSH…LQCN, PHRA…RTGN, NTLD…QEDL, RYTA…SEQS, IRQP…VSIN, YSNS…IKVE, FSPT…RKSA, LHPS…SLQS, GMRD…AKGK, PTSA…TGPP, AVTG…SSVT, DGQT…AAAQ, and RMFA…EKEE. Positions 1210–1226 are enriched in low complexity; sequence SHSSASSSEENSSSSAA. Polar residues predominate over residues 1237 to 1248; that stretch reads PSPSTELMNVTT. The span at 1260 to 1271 shows a compositional bias: low complexity; it reads SPLRSPLKRQSS. Polar residues predominate over residues 1641-1658; the sequence is TEGTTPGSLSTPHGQTDL. The span at 1887–1898 shows a compositional bias: low complexity; it reads SSGSQTGSGYST. Polar residues predominate over residues 1907-1920; it reads NDAQSPASEPNNNS. Residues 1921 to 1931 show a composition bias toward acidic residues; the sequence is DSDEQDEGVES. Composition is skewed to polar residues over residues 2208-2218 and 2267-2281; these read PYQSLSYTSGD and EQTA…RTGN. Positions 2550-2560 are enriched in polar residues; the sequence is RYTAGSSSPTP. A compositionally biased stretch (basic and acidic residues) spans 2606–2624; that stretch reads TRSREPRGRGTLGRSERRT. Over residues 3581 to 3595 the composition is skewed to basic and acidic residues; sequence KRSDRPREDLPDIKV. Residues 3746–3770 are compositionally biased toward basic and acidic residues; that stretch reads TEHEDLALRRSCERSSRSLDQDSPP. The span at 4017 to 4039 shows a compositional bias: polar residues; that stretch reads PTSATYPSEGQHTPSSTPPSVHN. Residues 4044–4056 are compositionally biased toward low complexity; sequence PGGPSTGLGSPLG. Composition is skewed to polar residues over residues 4249-4268, 4276-4286, and 4804-4814; these read DGQT…TPSH, TGRTRSVSDSS, and GQKSPTTQQDE. A compositionally biased stretch (basic and acidic residues) spans 4816 to 4827; the sequence is SSDKKEEREKEE.

The protein resides in the cell membrane. It localises to the endoplasmic reticulum membrane. It is found in the mitochondrion membrane. In terms of biological role, tube-forming lipid transport protein which provides phosphatidylethanolamine for glycosylphosphatidylinositol (GPI) anchor synthesis in the endoplasmic reticulum. Plays a role in endosomal trafficking and endosome recycling. Also involved in the actin cytoskeleton and cilia structural dynamics. Acts as a regulator of phagocytosis. This chain is Bridge-like lipid transfer protein family member 1 (bltp1), found in Danio rerio (Zebrafish).